Here is a 222-residue protein sequence, read N- to C-terminus: Thiopurine S-methyltransferase (222 aa).

S-adenosyl-L-methionine contacts are provided by tryptophan 10, leucine 45, glutamate 66, and arginine 124.

Belongs to the class I-like SAM-binding methyltransferase superfamily. TPMT family.

The protein resides in the cytoplasm. It catalyses the reaction S-adenosyl-L-methionine + a thiopurine = S-adenosyl-L-homocysteine + a thiopurine S-methylether.. The chain is Thiopurine S-methyltransferase from Methylococcus capsulatus (strain ATCC 33009 / NCIMB 11132 / Bath).